The chain runs to 173 residues: Cytochrome c-type biogenesis protein CcmE (173 aa).

Topologically, residues 1 to 8 (MNPRRKSR) are cytoplasmic. Residues 9–29 (FKLVIFVVLGIAIASGLMLYA) traverse the membrane as a helical; Signal-anchor for type II membrane protein segment. The Periplasmic portion of the chain corresponds to 30 to 173 (LRQNIDLFYT…RDRQEKEGAK (144 aa)). His131 and Tyr135 together coordinate heme. The interval 139–173 (ELGEKMQKVHKPMGIKAADLKGESERDRQEKEGAK) is disordered. Residues 156–173 (ADLKGESERDRQEKEGAK) are compositionally biased toward basic and acidic residues.

It belongs to the CcmE/CycJ family.

It is found in the cell inner membrane. In terms of biological role, heme chaperone required for the biogenesis of c-type cytochromes. Transiently binds heme delivered by CcmC and transfers the heme to apo-cytochromes in a process facilitated by CcmF and CcmH. The protein is Cytochrome c-type biogenesis protein CcmE of Haemophilus influenzae (strain 86-028NP).